Here is a 163-residue protein sequence, read N- to C-terminus: MAPQNMPAVSIDINMFWQIINFLILMFFFKKYFQKPISKVLDARKEKIANELKQAEIDREMAAKANEETQGILKAARTEANEILLRAEKKADDRKEAILKEANSQREKTIKSAELEVEKMKKQARKELQSEVTALAVNLAEKMINEKLDSKLGANLLNVLLKR.

Residues 9–29 (VSIDINMFWQIINFLILMFFF) form a helical membrane-spanning segment.

The protein belongs to the ATPase B chain family. F-type ATPases have 2 components, F(1) - the catalytic core - and F(0) - the membrane proton channel. F(1) has five subunits: alpha(3), beta(3), gamma(1), delta(1), epsilon(1). F(0) has three main subunits: a(1), b(2) and c(10-14). The alpha and beta chains form an alternating ring which encloses part of the gamma chain. F(1) is attached to F(0) by a central stalk formed by the gamma and epsilon chains, while a peripheral stalk is formed by the delta and b chains.

Its subcellular location is the cell inner membrane. Its function is as follows. F(1)F(0) ATP synthase produces ATP from ADP in the presence of a proton or sodium gradient. F-type ATPases consist of two structural domains, F(1) containing the extramembraneous catalytic core and F(0) containing the membrane proton channel, linked together by a central stalk and a peripheral stalk. During catalysis, ATP synthesis in the catalytic domain of F(1) is coupled via a rotary mechanism of the central stalk subunits to proton translocation. Component of the F(0) channel, it forms part of the peripheral stalk, linking F(1) to F(0). This chain is ATP synthase subunit b, sodium ion specific (atpF), found in Ilyobacter tartaricus.